The sequence spans 371 residues: Mitogen-activated protein kinase homolog MMK2 (371 aa).

Residues 37-323 (VPPIRSVGRG…VDEALCHPYM (287 aa)) form the Protein kinase domain. ATP-binding positions include 43-51 (VGRGAYGIV) and Lys-66. Residue Asp-163 is the Proton acceptor of the active site. Position 195 is a phosphothreonine (Thr-195). The TXY signature appears at 195–197 (TEY). Position 197 is a phosphotyrosine (Tyr-197).

Belongs to the protein kinase superfamily. CMGC Ser/Thr protein kinase family. MAP kinase subfamily. Mg(2+) serves as cofactor. Dually phosphorylated on Thr-195 and Tyr-197, which activates the enzyme. Autophosphorylated.

It catalyses the reaction L-seryl-[protein] + ATP = O-phospho-L-seryl-[protein] + ADP + H(+). It carries out the reaction L-threonyl-[protein] + ATP = O-phospho-L-threonyl-[protein] + ADP + H(+). Activated by tyrosine and threonine phosphorylation. The sequence is that of Mitogen-activated protein kinase homolog MMK2 (MMK2) from Medicago sativa (Alfalfa).